A 420-amino-acid polypeptide reads, in one-letter code: Diaminobutyrate--2-oxoglutarate transaminase (420 aa).

N6-(pyridoxal phosphate)lysine is present on K271.

The protein belongs to the class-III pyridoxal-phosphate-dependent aminotransferase family. Requires pyridoxal 5'-phosphate as cofactor.

The catalysed reaction is L-2,4-diaminobutanoate + 2-oxoglutarate = L-aspartate 4-semialdehyde + L-glutamate. It functions in the pathway amine and polyamine biosynthesis; ectoine biosynthesis; L-ectoine from L-aspartate 4-semialdehyde: step 1/3. Catalyzes reversively the conversion of L-aspartate beta-semialdehyde (ASA) to L-2,4-diaminobutyrate (DABA) by transamination with L-glutamate. This is Diaminobutyrate--2-oxoglutarate transaminase (ectB) from Streptomyces anulatus (Streptomyces chrysomallus).